A 137-amino-acid polypeptide reads, in one-letter code: Chaperone protein YscB (137 aa).

Interacts with SycN to form a complex which specifically binds to YopN.

It localises to the cytoplasm. It is found in the cell inner membrane. Its function is as follows. Functions as a specific chaperone for YopN. It could facilitate the secretion and the subsequent translocation of YopN. The protein is Chaperone protein YscB (yscB) of Yersinia enterocolitica serotype O:8 / biotype 1B (strain NCTC 13174 / 8081).